The following is a 26-amino-acid chain: Conotoxin Eb6.17 (26 aa).

Intrachain disulfides connect cysteine 7-cysteine 18 and cysteine 13-cysteine 25.

This sequence belongs to the conotoxin O1 superfamily. Expressed by the venom duct.

The protein localises to the secreted. The sequence is that of Conotoxin Eb6.17 (E1) from Conus ebraeus (Hebrew cone).